Reading from the N-terminus, the 130-residue chain is Small ribosomal subunit protein uS9 (130 aa).

Residues 101-110 show a composition bias toward basic and acidic residues; sequence AGFLTRDPRM. The disordered stretch occupies residues 101–130; the sequence is AGFLTRDPRMKERKKYGLKKARRAPQFSKR. Basic residues predominate over residues 111–130; sequence KERKKYGLKKARRAPQFSKR.

The protein belongs to the universal ribosomal protein uS9 family.

The sequence is that of Small ribosomal subunit protein uS9 from Clostridium tetani (strain Massachusetts / E88).